A 431-amino-acid chain; its full sequence is Serine--tRNA ligase (431 aa).

238–240 is an L-serine binding site; it reads TAE. Residue 269 to 271 coordinates ATP; it reads RSE. Glu-292 contacts L-serine. 356-359 serves as a coordination point for ATP; sequence EISS. Ser-392 provides a ligand contact to L-serine.

The protein belongs to the class-II aminoacyl-tRNA synthetase family. Type-1 seryl-tRNA synthetase subfamily. In terms of assembly, homodimer. The tRNA molecule binds across the dimer.

The protein resides in the cytoplasm. It carries out the reaction tRNA(Ser) + L-serine + ATP = L-seryl-tRNA(Ser) + AMP + diphosphate + H(+). The catalysed reaction is tRNA(Sec) + L-serine + ATP = L-seryl-tRNA(Sec) + AMP + diphosphate + H(+). It functions in the pathway aminoacyl-tRNA biosynthesis; selenocysteinyl-tRNA(Sec) biosynthesis; L-seryl-tRNA(Sec) from L-serine and tRNA(Sec): step 1/1. Functionally, catalyzes the attachment of serine to tRNA(Ser). Is also able to aminoacylate tRNA(Sec) with serine, to form the misacylated tRNA L-seryl-tRNA(Sec), which will be further converted into selenocysteinyl-tRNA(Sec). This Pectobacterium carotovorum subsp. carotovorum (strain PC1) protein is Serine--tRNA ligase.